Here is a 498-residue protein sequence, read N- to C-terminus: ATP synthase subunit beta, chloroplastic (498 aa).

172 to 179 provides a ligand contact to ATP; the sequence is GGAGVGKT.

This sequence belongs to the ATPase alpha/beta chains family. In terms of assembly, F-type ATPases have 2 components, CF(1) - the catalytic core - and CF(0) - the membrane proton channel. CF(1) has five subunits: alpha(3), beta(3), gamma(1), delta(1), epsilon(1). CF(0) has four main subunits: a(1), b(1), b'(1) and c(9-12).

The protein localises to the plastid. The protein resides in the chloroplast thylakoid membrane. The catalysed reaction is ATP + H2O + 4 H(+)(in) = ADP + phosphate + 5 H(+)(out). Produces ATP from ADP in the presence of a proton gradient across the membrane. The catalytic sites are hosted primarily by the beta subunits. The chain is ATP synthase subunit beta, chloroplastic from Daucus carota (Wild carrot).